A 115-amino-acid polypeptide reads, in one-letter code: NADH-ubiquinone oxidoreductase chain 3 (115 aa).

A run of 3 helical transmembrane segments spans residues leucine 4–leucine 24, phenylalanine 55–leucine 75, and methionine 87–leucine 107.

This sequence belongs to the complex I subunit 3 family. As to quaternary structure, core subunit of respiratory chain NADH dehydrogenase (Complex I) which is composed of 45 different subunits. Interacts with TMEM186. Interacts with TMEM242.

It is found in the mitochondrion inner membrane. It carries out the reaction a ubiquinone + NADH + 5 H(+)(in) = a ubiquinol + NAD(+) + 4 H(+)(out). Core subunit of the mitochondrial membrane respiratory chain NADH dehydrogenase (Complex I) which catalyzes electron transfer from NADH through the respiratory chain, using ubiquinone as an electron acceptor. Essential for the catalytic activity of complex I. The protein is NADH-ubiquinone oxidoreductase chain 3 of Peromyscus eremicus (Cactus mouse).